Here is a 258-residue protein sequence, read N- to C-terminus: 5-oxoprolinase subunit A 2 (258 aa).

The protein belongs to the LamB/PxpA family. In terms of assembly, forms a complex composed of PxpA, PxpB and PxpC.

It catalyses the reaction 5-oxo-L-proline + ATP + 2 H2O = L-glutamate + ADP + phosphate + H(+). Its function is as follows. Catalyzes the cleavage of 5-oxoproline to form L-glutamate coupled to the hydrolysis of ATP to ADP and inorganic phosphate. In Pseudomonas putida (strain ATCC 47054 / DSM 6125 / CFBP 8728 / NCIMB 11950 / KT2440), this protein is 5-oxoprolinase subunit A 2.